Reading from the N-terminus, the 431-residue chain is Enolase (431 aa).

Gln168 is a (2R)-2-phosphoglycerate binding site. Residue Glu210 is the Proton donor of the active site. Mg(2+) contacts are provided by Asp247, Glu291, and Asp318. Residues Lys343, Arg372, Ser373, and Lys394 each coordinate (2R)-2-phosphoglycerate. Lys343 (proton acceptor) is an active-site residue.

It belongs to the enolase family. Component of the RNA degradosome, a multiprotein complex involved in RNA processing and mRNA degradation. Mg(2+) serves as cofactor.

The protein resides in the cytoplasm. It is found in the secreted. Its subcellular location is the cell surface. It carries out the reaction (2R)-2-phosphoglycerate = phosphoenolpyruvate + H2O. It participates in carbohydrate degradation; glycolysis; pyruvate from D-glyceraldehyde 3-phosphate: step 4/5. Functionally, catalyzes the reversible conversion of 2-phosphoglycerate (2-PG) into phosphoenolpyruvate (PEP). It is essential for the degradation of carbohydrates via glycolysis. In Acinetobacter baumannii (strain AYE), this protein is Enolase.